We begin with the raw amino-acid sequence, 433 residues long: Probable glycine dehydrogenase (decarboxylating) subunit 1 (433 aa).

Belongs to the GcvP family. N-terminal subunit subfamily. In terms of assembly, the glycine cleavage system is composed of four proteins: P, T, L and H. In this organism, the P 'protein' is a heterodimer of two subunits.

The catalysed reaction is N(6)-[(R)-lipoyl]-L-lysyl-[glycine-cleavage complex H protein] + glycine + H(+) = N(6)-[(R)-S(8)-aminomethyldihydrolipoyl]-L-lysyl-[glycine-cleavage complex H protein] + CO2. Functionally, the glycine cleavage system catalyzes the degradation of glycine. The P protein binds the alpha-amino group of glycine through its pyridoxal phosphate cofactor; CO(2) is released and the remaining methylamine moiety is then transferred to the lipoamide cofactor of the H protein. The protein is Probable glycine dehydrogenase (decarboxylating) subunit 1 of Thermoplasma acidophilum (strain ATCC 25905 / DSM 1728 / JCM 9062 / NBRC 15155 / AMRC-C165).